Consider the following 1316-residue polypeptide: DNA-directed RNA polymerase subunit beta' (1316 aa).

4 residues coordinate Zn(2+): Cys60, Cys62, Cys75, and Cys78. 3 residues coordinate Mg(2+): Asp535, Asp537, and Asp539. Zn(2+) is bound by residues Cys891, Cys968, Cys975, and Cys978.

It belongs to the RNA polymerase beta' chain family. The RNAP catalytic core consists of 2 alpha, 1 beta, 1 beta' and 1 omega subunit. When a sigma factor is associated with the core the holoenzyme is formed, which can initiate transcription. Requires Mg(2+) as cofactor. Zn(2+) serves as cofactor.

The enzyme catalyses RNA(n) + a ribonucleoside 5'-triphosphate = RNA(n+1) + diphosphate. DNA-dependent RNA polymerase catalyzes the transcription of DNA into RNA using the four ribonucleoside triphosphates as substrates. This Mycobacterium tuberculosis (strain ATCC 25177 / H37Ra) protein is DNA-directed RNA polymerase subunit beta'.